A 472-amino-acid chain; its full sequence is L-aspartate oxidase (472 aa).

Residues Ser-7–Ala-10, Ser-36–Gly-43, and Asp-190 contribute to the FAD site. Arg-256 (proton donor/acceptor) is an active-site residue. Residues Glu-332 and Ser-348–Leu-349 each bind FAD.

The protein belongs to the FAD-dependent oxidoreductase 2 family. NadB subfamily. FAD is required as a cofactor.

The protein resides in the cytoplasm. It catalyses the reaction L-aspartate + O2 = iminosuccinate + H2O2. The protein operates within cofactor biosynthesis; NAD(+) biosynthesis; iminoaspartate from L-aspartate (oxidase route): step 1/1. In terms of biological role, catalyzes the oxidation of L-aspartate to iminoaspartate, the first step in the de novo biosynthesis of NAD(+). This chain is L-aspartate oxidase (nadB), found in Saccharolobus solfataricus (strain ATCC 35092 / DSM 1617 / JCM 11322 / P2) (Sulfolobus solfataricus).